The primary structure comprises 96 residues: uncharacterized protein (96 aa).

This is an uncharacterized protein from Methanocaldococcus jannaschii (strain ATCC 43067 / DSM 2661 / JAL-1 / JCM 10045 / NBRC 100440) (Methanococcus jannaschii).